The primary structure comprises 684 residues: Glycine--tRNA ligase beta subunit (684 aa).

The protein belongs to the class-II aminoacyl-tRNA synthetase family. As to quaternary structure, tetramer of two alpha and two beta subunits.

The protein localises to the cytoplasm. It catalyses the reaction tRNA(Gly) + glycine + ATP = glycyl-tRNA(Gly) + AMP + diphosphate. The chain is Glycine--tRNA ligase beta subunit from Stutzerimonas stutzeri (strain A1501) (Pseudomonas stutzeri).